The primary structure comprises 142 residues: Hemoglobin subunit alpha-4 (142 aa).

Residues 2–142 (VLSAADKSNV…VSTVLTSKYR (141 aa)) enclose the Globin domain. Residue His59 coordinates O2. Heme b is bound at residue His88.

Belongs to the globin family. Heterotetramer of two alpha chains and two beta chains. Red blood cells.

In terms of biological role, involved in oxygen transport from the lung to the various peripheral tissues. In Bubalus bubalis (Domestic water buffalo), this protein is Hemoglobin subunit alpha-4.